We begin with the raw amino-acid sequence, 54 residues long: U7-myrmicitoxin-Tb1a (54 aa).

The N-terminal stretch at 1-26 is a signal peptide; sequence MQLSHLLLAFAMIFVMTIIHTPQVQA. The propeptide occupies 27–36; that stretch reads DAMADADADA. A disulfide bridge links Cys40 with Cys49.

Expressed by the venom gland.

It localises to the secreted. Its function is as follows. Venom protein with unknown function. Does not induce paralysis when a high dose is administered by intrathoracic injection into the blowfly Lucilia caesar. The chain is U7-myrmicitoxin-Tb1a from Tetramorium bicarinatum (Tramp ant).